Reading from the N-terminus, the 1060-residue chain is Carbamoyl phosphate synthase large chain (1060 aa).

The segment at 1–401 (MPKRTDIKKI…SLLKAVRSLE (401 aa)) is carboxyphosphate synthetic domain. The ATP site is built by Arg-129, Arg-169, Gly-175, Gly-176, Lys-208, Ile-210, Glu-215, Gly-241, Ile-242, His-243, Gln-284, and Glu-298. The ATP-grasp 1 domain maps to 133 to 327 (KQLMEELEQP…IAKLAAKIAV (195 aa)). Residues Gln-284, Glu-298, and Asn-300 each contribute to the Mg(2+) site. Mn(2+) is bound by residues Gln-284, Glu-298, and Asn-300. The segment at 402–546 (IGAYHNELAE…YSTYEVENES (145 aa)) is oligomerization domain. The segment at 547–929 (NVSKKPSVLV…ALYKAFEASG (383 aa)) is carbamoyl phosphate synthetic domain. In terms of domain architecture, ATP-grasp 2 spans 671–861 (EQALQELAIP…MAQVATKAIL (191 aa)). ATP is bound by residues Arg-707, Ser-746, Leu-748, Glu-752, Gly-777, Val-778, His-779, Ser-780, Gln-820, and Glu-832. 3 residues coordinate Mg(2+): Gln-820, Glu-832, and Asn-834. Mn(2+) is bound by residues Gln-820, Glu-832, and Asn-834. In terms of domain architecture, MGS-like spans 930–1060 (LHLPSYGAVL…ESRAFTTEAI (131 aa)). The allosteric domain stretch occupies residues 930 to 1060 (LHLPSYGAVL…ESRAFTTEAI (131 aa)).

This sequence belongs to the CarB family. In terms of assembly, composed of two chains; the small (or glutamine) chain promotes the hydrolysis of glutamine to ammonia, which is used by the large (or ammonia) chain to synthesize carbamoyl phosphate. Tetramer of heterodimers (alpha,beta)4. The cofactor is Mg(2+). It depends on Mn(2+) as a cofactor.

It catalyses the reaction hydrogencarbonate + L-glutamine + 2 ATP + H2O = carbamoyl phosphate + L-glutamate + 2 ADP + phosphate + 2 H(+). It carries out the reaction hydrogencarbonate + NH4(+) + 2 ATP = carbamoyl phosphate + 2 ADP + phosphate + 2 H(+). Its pathway is amino-acid biosynthesis; L-arginine biosynthesis; carbamoyl phosphate from bicarbonate: step 1/1. It functions in the pathway pyrimidine metabolism; UMP biosynthesis via de novo pathway; (S)-dihydroorotate from bicarbonate: step 1/3. Large subunit of the glutamine-dependent carbamoyl phosphate synthetase (CPSase). CPSase catalyzes the formation of carbamoyl phosphate from the ammonia moiety of glutamine, carbonate, and phosphate donated by ATP, constituting the first step of 2 biosynthetic pathways, one leading to arginine and/or urea and the other to pyrimidine nucleotides. The large subunit (synthetase) binds the substrates ammonia (free or transferred from glutamine from the small subunit), hydrogencarbonate and ATP and carries out an ATP-coupled ligase reaction, activating hydrogencarbonate by forming carboxy phosphate which reacts with ammonia to form carbamoyl phosphate. The sequence is that of Carbamoyl phosphate synthase large chain from Enterococcus faecalis (strain ATCC 700802 / V583).